Consider the following 1000-residue polypeptide: MPGKLKVKIVAGRHLPVMDRASDLTDAFVEVKFGNTTFKTDVYLKSLNPQWNSEWFKFEVDDEDLQDEPLQITVLDHDTYSANDAIGKVYIDIDPLLYSEAATVISGWFPIYDTIHGIRGEINVVVKVDLFNDLNRFRQSSCGVKFFCTTSIPKCYRAVIIHGFVEELVVNEDPEYQWIDRIRTPRASNEARQRLISLMSGELQRKIGLKVLEMRGNAVVGYLQCFDLEGESGLVVRAIGTACTLDKLSSPAAFLPACNSPSKEMKEIPFNEDPNPNTHSSGPSTPLKNQTYSFSPSKSYSRQSSSSDTDLSLTPKTGMGSGSAGKEGGPFKALLRQQTQSALEQREFPFFTLTAFPPGFLVHVGGVVSARSVKLLDRIHNPDEPETRDAWWAEIRQEIKSHAKALGCHAVVGYSESTSICEEVCILSASGTAAVLNPRFLQDGTVEGCLEQRLEENLPTRCGFCHIPYDELNMPFPAHLTYCYNCRKQKVPDVLFTTIDLPTDATVIGKGCLIQARLCRLKKKAQAEANATAISNLLPFMEYEVHTQLMNKLKLKGMNALFGLRIQITVGENMLMGLASATGVYLAALPTPGGIQIAGKTPNDGSYEQHISHMQKKINDTIAKNKELYEINPPEISEEIIGSPIPEPRQRSRLLRSQSESSDEVTELDLSHGKKDAFVLEIDDTDAMEDVHSLLTDVPPPSGFYSCNTEIMPGINNWTSEIQMFTSVRVIRLSSLNLTNQALNKNFNDLCENLLKSLYFKLRSMIPCCLCHVNFTVSLPEDELIQVTVTAVAITFDKNQALQTTKTPVEKSLQRASTDNEELLQFPLELCSDSLPSHPFPPAKAMTVEKASPVGDGNFRNRSAPPCANSTVGVVKMTPLSFIPGAKITKYLGIINMFFIRETTSLREEGGVSGFLHAFIAEVFAMVRAHVAALGGNAVVSYIMKQCVFMENPNKNQAQCLINVSGDAVVFVRESDLEVVSSQQPTTNCQSSCTEGEVTT.

Positions 1–109 (MPGKLKVKIV…EAATVISGWF (109 aa)) constitute a C2 domain. Ca(2+)-binding residues include D19, D26, D76, D78, S81, and D84. S197 carries the post-translational modification Phosphoserine; by PKB/AKT2. Phosphoserine occurs at positions 200 and 260. A disordered region spans residues 265–330 (MKEIPFNEDP…SGSAGKEGGP (66 aa)). Residues 274 to 289 (PNPNTHSSGPSTPLKN) show a composition bias toward polar residues. A compositionally biased stretch (low complexity) spans 290-318 (QTYSFSPSKSYSRQSSSSDTDLSLTPKTG). Residues S293, S295, S304, S305, and S306 each carry the phosphoserine modification. T317 carries the post-translational modification Phosphothreonine. The span at 319 to 328 (MGSGSAGKEG) shows a compositional bias: gly residues. A Phosphoserine modification is found at S323. Phosphothreonine is present on T601. The tract at residues 639-669 (EIIGSPIPEPRQRSRLLRSQSESSDEVTELD) is disordered. A phosphoserine mark is found at S643, S657, S659, S661, and S662. T666 bears the Phosphothreonine mark. Residue S671 is modified to Phosphoserine. At T807 the chain carries Phosphothreonine. Phosphoserine occurs at positions 817 and 852.

It depends on Ca(2+) as a cofactor. Post-translationally, phosphorylated on Ser-197 by active myristoylated kinase AKT2; insulin-stimulated phosphorylation by AKT2 regulates SLC2A4/GLUT4 translocation into the plasma membrane.

It is found in the cytoplasmic vesicle membrane. The protein resides in the cytoplasm. The protein localises to the cell cortex. It localises to the cell membrane. Its subcellular location is the cell projection. It is found in the ruffle. In terms of biological role, required for insulin-stimulated glucose transport and glucose transporter SLC2A4/GLUT4 translocation from intracellular glucose storage vesicle (GSV) to the plasma membrane (PM) in adipocytes. Binds phospholipid membranes in a calcium-dependent manner and is necessary for the optimal membrane fusion between SLC2A4/GLUT4 GSV and the PM. This is C2 domain-containing protein 5 (C2CD5) from Homo sapiens (Human).